A 288-amino-acid polypeptide reads, in one-letter code: Polyamine aminopropyltransferase (288 aa).

Residues 9–238 (ETLHDQFGQY…GIMTFAWATD (230 aa)) form the PABS domain. Q33 provides a ligand contact to S-methyl-5'-thioadenosine. 2 residues coordinate spermidine: H64 and D88. S-methyl-5'-thioadenosine contacts are provided by residues E108 and 140-141 (DG). D158 acts as the Proton acceptor in catalysis. 158-161 (DCTD) serves as a coordination point for spermidine. An S-methyl-5'-thioadenosine-binding site is contributed by P165.

This sequence belongs to the spermidine/spermine synthase family. As to quaternary structure, homodimer or homotetramer.

Its subcellular location is the cytoplasm. The catalysed reaction is S-adenosyl 3-(methylsulfanyl)propylamine + putrescine = S-methyl-5'-thioadenosine + spermidine + H(+). It functions in the pathway amine and polyamine biosynthesis; spermidine biosynthesis; spermidine from putrescine: step 1/1. Catalyzes the irreversible transfer of a propylamine group from the amino donor S-adenosylmethioninamine (decarboxy-AdoMet) to putrescine (1,4-diaminobutane) to yield spermidine. The protein is Polyamine aminopropyltransferase of Shigella flexneri serotype 5b (strain 8401).